A 337-amino-acid polypeptide reads, in one-letter code: B3 domain-containing protein REM16 (337 aa).

2 consecutive DNA-binding regions (TF-B3) follow at residues 22–116 and 223–321; these read TLHF…FDGQ and FLVF…FRGE.

The protein localises to the nucleus. This Arabidopsis thaliana (Mouse-ear cress) protein is B3 domain-containing protein REM16 (REM16).